We begin with the raw amino-acid sequence, 102 residues long: MAGQKIRIRLKSYDHEVIDQSAKKIVETVTNAGATVVGPVPLPTEKNVLVVIRSPHKYKDSREHFEMRTHKRLIDIVDPTPKAVDSLMHIDLPADVNIEIKL.

It belongs to the universal ribosomal protein uS10 family. Part of the 30S ribosomal subunit.

Its function is as follows. Involved in the binding of tRNA to the ribosomes. This is Small ribosomal subunit protein uS10 from Bifidobacterium adolescentis (strain ATCC 15703 / DSM 20083 / NCTC 11814 / E194a).